The sequence spans 268 residues: Undecaprenyl-diphosphatase (268 aa).

Helical transmembrane passes span 47–67 (FTIL…FAKL), 83–103 (FVIG…LAGG), 109–129 (LFNP…LLWV), 144–164 (FPLP…IPGV), 184–204 (AAEF…VYDL), 217–237 (LIVA…VKSF), and 246–266 (FTLF…ALAL).

This sequence belongs to the UppP family.

The protein resides in the cell inner membrane. The catalysed reaction is di-trans,octa-cis-undecaprenyl diphosphate + H2O = di-trans,octa-cis-undecaprenyl phosphate + phosphate + H(+). Its function is as follows. Catalyzes the dephosphorylation of undecaprenyl diphosphate (UPP). Confers resistance to bacitracin. This Rhodopseudomonas palustris (strain BisB18) protein is Undecaprenyl-diphosphatase.